The following is a 583-amino-acid chain: Radixin (583 aa).

Residues 5–295 (INVRVTTMDA…GNHELYMRRR (291 aa)) enclose the FERM domain. 60-63 (KLNK) lines the a 1,2-diacyl-sn-glycero-3-phospho-(1D-myo-inositol) pocket. Lys83 is subject to N6-succinyllysine. Residue Lys278 participates in a 1,2-diacyl-sn-glycero-3-phospho-(1D-myo-inositol) binding. Disordered regions lie at residues 310 to 336 (REEKHQKQLERAQLENEKKKREIAEKE), 374 to 407 (ELDQERKRAKEEAERLEKERRAAEEAKSAIAKQA), and 458 to 526 (KTKE…RVNK). Residues 374–400 (ELDQERKRAKEEAERLEKERRAAEEAK) show a composition bias toward basic and acidic residues. Positions 469 to 480 (APPPPPPPPVVP) are enriched in pro residues. Composition is skewed to basic and acidic residues over residues 483 to 492 (ENEHDEHDEN) and 506 to 525 (MNHRSEEERVTETQKNERVN). Thr564 carries the phosphothreonine; by ROCK2 modification.

Interacts with CPNE1 (via VWFA domain) and CPNE4 (via VWFA domain). Binds NHERF1. Interacts with NHERF1, NHERF2, LAYN, MME/NEP and ICAM2. Interacts (via FERM domain) with SPN/CD43 cytoplasmic tail. Interacts with CD44. Interacts with CLIC5; may work together in a complex which also includes EZR and MYO6 to stabilize linkages between the plasma membrane and subjacent actin cytoskeleton at the base of stereocilia. Phosphorylated by tyrosine-protein kinases. Phosphorylation by ROCK2 suppresses the head-to-tail association of the N-terminal and C-terminal halves resulting in an opened conformation which is capable of actin and membrane-binding.

Its subcellular location is the cell membrane. It localises to the cytoplasm. The protein localises to the cytoskeleton. It is found in the cleavage furrow. The protein resides in the cell projection. Its subcellular location is the microvillus. It localises to the stereocilium. Its activity is regulated as follows. A head-to-tail association, of the N-terminal and C-terminal halves results in a closed conformation (inactive form) which is incapable of actin or membrane-binding. Its function is as follows. Probably plays a crucial role in the binding of the barbed end of actin filaments to the plasma membrane. The polypeptide is Radixin (RDX) (Sus scrofa (Pig)).